Consider the following 382-residue polypeptide: 1-deoxy-D-xylulose 5-phosphate reductoisomerase (382 aa).

The NADPH site is built by Thr-10, Gly-11, Ser-12, Ile-13, Gly-36, and Asn-122. Lys-123 serves as a coordination point for 1-deoxy-D-xylulose 5-phosphate. Glu-124 is an NADPH binding site. Asp-148 is a binding site for Mn(2+). 1-deoxy-D-xylulose 5-phosphate is bound by residues Ser-149, Glu-150, Ser-174, and His-197. Glu-150 is a Mn(2+) binding site. Position 203 (Gly-203) interacts with NADPH. Positions 210, 215, 216, and 219 each coordinate 1-deoxy-D-xylulose 5-phosphate. Glu-219 is a binding site for Mn(2+).

This sequence belongs to the DXR family. The cofactor is Mg(2+). Mn(2+) serves as cofactor.

It catalyses the reaction 2-C-methyl-D-erythritol 4-phosphate + NADP(+) = 1-deoxy-D-xylulose 5-phosphate + NADPH + H(+). It participates in isoprenoid biosynthesis; isopentenyl diphosphate biosynthesis via DXP pathway; isopentenyl diphosphate from 1-deoxy-D-xylulose 5-phosphate: step 1/6. Its function is as follows. Catalyzes the NADPH-dependent rearrangement and reduction of 1-deoxy-D-xylulose-5-phosphate (DXP) to 2-C-methyl-D-erythritol 4-phosphate (MEP). The protein is 1-deoxy-D-xylulose 5-phosphate reductoisomerase of Chlorobium phaeobacteroides (strain BS1).